A 175-amino-acid polypeptide reads, in one-letter code: Translation initiation factor IF-3 (175 aa).

Belongs to the IF-3 family. As to quaternary structure, monomer.

It localises to the cytoplasm. In terms of biological role, IF-3 binds to the 30S ribosomal subunit and shifts the equilibrium between 70S ribosomes and their 50S and 30S subunits in favor of the free subunits, thus enhancing the availability of 30S subunits on which protein synthesis initiation begins. The polypeptide is Translation initiation factor IF-3 (Chromobacterium violaceum (strain ATCC 12472 / DSM 30191 / JCM 1249 / CCUG 213 / NBRC 12614 / NCIMB 9131 / NCTC 9757 / MK)).